The sequence spans 229 residues: Peptidase E (229 aa).

Catalysis depends on charge relay system residues S120, D135, and H157.

Belongs to the peptidase S51 family.

It is found in the cytoplasm. It carries out the reaction Dipeptidase E catalyzes the hydrolysis of dipeptides Asp-|-Xaa. It does not act on peptides with N-terminal Glu, Asn or Gln, nor does it cleave isoaspartyl peptides.. Its function is as follows. Hydrolyzes dipeptides containing N-terminal aspartate residues. May play a role in allowing the cell to use peptide aspartate to spare carbon otherwise required for the synthesis of the aspartate family of amino acids. The chain is Peptidase E from Escherichia coli O6:K15:H31 (strain 536 / UPEC).